A 290-amino-acid chain; its full sequence is Light-independent protochlorophyllide reductase iron-sulfur ATP-binding protein (290 aa).

Residues 10–15 and Lys-39 each bind ATP; that span reads GIGKST. Ser-14 contacts Mg(2+). 2 residues coordinate [4Fe-4S] cluster: Cys-95 and Cys-129. ATP is bound at residue 180–181; sequence NR.

The protein belongs to the NifH/BchL/ChlL family. In terms of assembly, homodimer. Protochlorophyllide reductase is composed of three subunits; ChlL, ChlN and ChlB. The cofactor is [4Fe-4S] cluster.

Its subcellular location is the plastid. It localises to the chloroplast. It carries out the reaction chlorophyllide a + oxidized 2[4Fe-4S]-[ferredoxin] + 2 ADP + 2 phosphate = protochlorophyllide a + reduced 2[4Fe-4S]-[ferredoxin] + 2 ATP + 2 H2O. Its pathway is porphyrin-containing compound metabolism; chlorophyll biosynthesis (light-independent). Functionally, component of the dark-operative protochlorophyllide reductase (DPOR) that uses Mg-ATP and reduced ferredoxin to reduce ring D of protochlorophyllide (Pchlide) to form chlorophyllide a (Chlide). This reaction is light-independent. The L component serves as a unique electron donor to the NB-component of the complex, and binds Mg-ATP. The sequence is that of Light-independent protochlorophyllide reductase iron-sulfur ATP-binding protein from Zygnema circumcarinatum (Green alga).